Reading from the N-terminus, the 308-residue chain is Aspartate carbamoyltransferase catalytic subunit (308 aa).

Carbamoyl phosphate-binding residues include arginine 55 and threonine 56. Lysine 85 contributes to the L-aspartate binding site. Carbamoyl phosphate is bound by residues arginine 106, histidine 135, and glutamine 138. Residues arginine 168 and arginine 229 each coordinate L-aspartate. Carbamoyl phosphate contacts are provided by leucine 267 and proline 268.

This sequence belongs to the aspartate/ornithine carbamoyltransferase superfamily. ATCase family. In terms of assembly, heterododecamer (2C3:3R2) of six catalytic PyrB chains organized as two trimers (C3), and six regulatory PyrI chains organized as three dimers (R2).

It carries out the reaction carbamoyl phosphate + L-aspartate = N-carbamoyl-L-aspartate + phosphate + H(+). The protein operates within pyrimidine metabolism; UMP biosynthesis via de novo pathway; (S)-dihydroorotate from bicarbonate: step 2/3. Its function is as follows. Catalyzes the condensation of carbamoyl phosphate and aspartate to form carbamoyl aspartate and inorganic phosphate, the committed step in the de novo pyrimidine nucleotide biosynthesis pathway. In Laribacter hongkongensis (strain HLHK9), this protein is Aspartate carbamoyltransferase catalytic subunit.